Here is a 74-residue protein sequence, read N- to C-terminus: Kappa-stichotoxin-Hmg1a (74 aa).

Positions 1–22 are cleaved as a signal peptide; it reads MKSQMIAAVLLIAFCLCVVVTA. A propeptide spanning residues 23-39 is cleaved from the precursor; it reads RMELQDVEDMENGFQKR. Residues 42–74 form the ShKT domain; it reads CKDLIPVSECTDIRCRTSMKYRLNLCRKTCGSC. 3 cysteine pairs are disulfide-bonded: C42–C74, C51–C67, and C56–C71.

It belongs to the sea anemone type 1 potassium channel toxin family. Type 1a subfamily.

The protein resides in the secreted. It is found in the nematocyst. Potently blocks the voltage-gated potassium channel Kv1.1/KCNA1 (Ki=75 pM), KcsA (Ki~1 nM) and moderately blocks Kv1.2/KCNA2 (Ki=2.5 nM) and Kv1.3/KCNA3 (Ki=3.1 nM). Also facilitates acetylcholine release at the avian neuromuscular junction. Blockade and dissociation rate are sensitive to voltage. In Heteractis magnifica (Magnificent sea anemone), this protein is Kappa-stichotoxin-Hmg1a.